A 269-amino-acid chain; its full sequence is MLRIAIVGAGGRMGRNLIQAVQQTEGLSLMAAFEREGSSLIGTDVGELVGISPLGITISACLAEKTADFDVLIDFTRPEATLEYLKFCLANDKKIVIGTTGFDENGKQAIKQASQKIAIVFASNYSVGVNLVFKLLEKAAKVMGNYCDIEIIEAHHKHKVDAPSGTALSMGEHIAKTLGRDLKTDAVFERYGIMDERQTNQIGFATIRAGDIVGEHSVWFVDEGERVEISHKATSRMTFAKGAVCAAQWLANQPQGLFDMTNVLALDQL.

NAD(+) contacts are provided by residues 8–13 (GAGGRM) and E34. R35 serves as a coordination point for NADP(+). NAD(+) is bound by residues 98–100 (GTT) and 122–125 (ASNY). The active-site Proton donor/acceptor is the H155. H156 provides a ligand contact to (S)-2,3,4,5-tetrahydrodipicolinate. The active-site Proton donor is the K159. A (S)-2,3,4,5-tetrahydrodipicolinate-binding site is contributed by 165 to 166 (GT).

This sequence belongs to the DapB family.

It localises to the cytoplasm. The enzyme catalyses (S)-2,3,4,5-tetrahydrodipicolinate + NAD(+) + H2O = (2S,4S)-4-hydroxy-2,3,4,5-tetrahydrodipicolinate + NADH + H(+). It carries out the reaction (S)-2,3,4,5-tetrahydrodipicolinate + NADP(+) + H2O = (2S,4S)-4-hydroxy-2,3,4,5-tetrahydrodipicolinate + NADPH + H(+). Its pathway is amino-acid biosynthesis; L-lysine biosynthesis via DAP pathway; (S)-tetrahydrodipicolinate from L-aspartate: step 4/4. Functionally, catalyzes the conversion of 4-hydroxy-tetrahydrodipicolinate (HTPA) to tetrahydrodipicolinate. This Haemophilus ducreyi (strain 35000HP / ATCC 700724) protein is 4-hydroxy-tetrahydrodipicolinate reductase.